Here is a 128-residue protein sequence, read N- to C-terminus: Large ribosomal subunit protein bL17 (128 aa).

Belongs to the bacterial ribosomal protein bL17 family. As to quaternary structure, part of the 50S ribosomal subunit. Contacts protein L32.

The polypeptide is Large ribosomal subunit protein bL17 (Streptococcus pyogenes serotype M49 (strain NZ131)).